The primary structure comprises 380 residues: QRFP-like peptide receptor (380 aa).

Topologically, residues 1–51 (MMLGNMTFTQTILHELLRQHNMTKNEFIERFGLPPLVYVPELSPGAKTVTL) are extracellular. 2 N-linked (GlcNAc...) asparagine glycosylation sites follow: Asn-5 and Asn-21. Residues 52–72 (VFYVIIFLAALLGNTLVVVVV) traverse the membrane as a helical segment. Residues 73–83 (WKNKVMRTTMN) are Cytoplasmic-facing. Residues 84–104 (IFICSLAASDLLITIVCIPVT) form a helical membrane-spanning segment. Topologically, residues 105-122 (LMQNMLQNWIMGDFMCKL) are extracellular. An intrachain disulfide couples Cys-120 to Cys-203. A helical transmembrane segment spans residues 123-143 (VPFIQTIAVASSILTLTGIAI). Residues 144 to 164 (ERYYAIIHPLKVKYLLSKTRA) lie on the Cytoplasmic side of the membrane. A helical membrane pass occupies residues 165-185 (GIILALVWVVSVGVATPMLFV). Over 186–216 (HKAEEIHDFLYEQRFVTCQEKWWGQTQQTSY) the chain is Extracellular. A helical membrane pass occupies residues 217–237 (TIFNLVVLFIIPLLTMTSLYI). Over 238–269 (RIAHRLWVQQPVGVTGNFAHGNSVRRKRQAVK) the chain is Cytoplasmic. Residues 270 to 290 (MLVVVVLLFAVCWLPYHTVTV) form a helical membrane-spanning segment. At 291–305 (MNELTGLRLEEKSAK) the chain is on the extracellular side. The chain crosses the membrane as a helical span at residues 306–326 (LLIAIVQLIAFSNSFNNPVVY). The Cytoplasmic segment spans residues 327–380 (AILNENFKKNFMTMLRCRVNRVSPQQVTPNTLQTPLEQSTRSCRLPAGAPNQQI).

The protein belongs to the G-protein coupled receptor 1 family.

The protein localises to the cell membrane. Functionally, receptor for QRFP-like peptide. The activity of this receptor is mediated by G proteins which activate a phosphatidyl-inositol-calcium second messenger system. In Branchiostoma floridae (Florida lancelet), this protein is QRFP-like peptide receptor.